A 396-amino-acid chain; its full sequence is 1-deoxy-D-xylulose 5-phosphate reductoisomerase (396 aa).

NADPH contacts are provided by T13, G14, S15, I16, and N127. K128 contributes to the 1-deoxy-D-xylulose 5-phosphate binding site. NADPH is bound at residue E129. D153 serves as a coordination point for Mn(2+). The 1-deoxy-D-xylulose 5-phosphate site is built by S154, E155, S184, and H207. E155 is a Mn(2+) binding site. G213 contacts NADPH. S220, N225, K226, and E229 together coordinate 1-deoxy-D-xylulose 5-phosphate. A Mn(2+)-binding site is contributed by E229.

It belongs to the DXR family. Mg(2+) serves as cofactor. Mn(2+) is required as a cofactor.

It catalyses the reaction 2-C-methyl-D-erythritol 4-phosphate + NADP(+) = 1-deoxy-D-xylulose 5-phosphate + NADPH + H(+). It participates in isoprenoid biosynthesis; isopentenyl diphosphate biosynthesis via DXP pathway; isopentenyl diphosphate from 1-deoxy-D-xylulose 5-phosphate: step 1/6. In terms of biological role, catalyzes the NADPH-dependent rearrangement and reduction of 1-deoxy-D-xylulose-5-phosphate (DXP) to 2-C-methyl-D-erythritol 4-phosphate (MEP). In Pseudomonas putida (strain W619), this protein is 1-deoxy-D-xylulose 5-phosphate reductoisomerase.